The following is a 921-amino-acid chain: Ubiquitin carboxyl-terminal hydrolase 11 (921 aa).

A compositionally biased stretch (low complexity) spans 1–16; sequence MAAVAADPAAAAVPAS. Residues 1–29 are disordered; it reads MAAVAADPAAAAVPASAEDRETQPEAMPD. One can recognise a DUSP domain in the interval 28-133; the sequence is PDLDQQWRQI…DQPPIERKVI (106 aa). The residue at position 194 (Lys194) is an N6-acetyllysine. In terms of domain architecture, USP spans 257 to 889; that stretch reads CGLTNLGNTC…AAYVLFYQRQ (633 aa). Cys266 serves as the catalytic Nucleophile. A disordered region spans residues 592–697; sequence TKPTSDDDDG…DRTTSPEEAQ (106 aa). The residue at position 596 (Ser596) is a Phosphoserine. Positions 597 to 624 are enriched in acidic residues; the sequence is DDDDGDEKGDENEDEDVEDDSSSEEEKE. Polar residues-rich tracts occupy residues 657-666 and 676-697; these read LDNSLHTSQW and FTLQ…EEAQ. Ser692 bears the Phosphoserine mark. The active-site Proton acceptor is His847. Residues 893–921 are disordered; sequence RRQSQTASSETPTSPASSSTPNSDIMDVN. The span at 895 to 915 shows a compositional bias: low complexity; that stretch reads QSQTASSETPTSPASSSTPNS. Phosphoserine is present on Ser906.

Belongs to the peptidase C19 family. As to quaternary structure, monomer. Associated component of the Polycomb group (PcG) multiprotein PRC1-like complex. Interacts with RANBP9/RANBPM. Interacts with BRCA2. Interacts with CHUK/IKKA. Interacts with NFKBIA. Interacts with SPRY3, RAE1, MYCBP2/PAM, and KCTD6.

Its subcellular location is the nucleus. The protein localises to the cytoplasm. It localises to the chromosome. The catalysed reaction is Thiol-dependent hydrolysis of ester, thioester, amide, peptide and isopeptide bonds formed by the C-terminal Gly of ubiquitin (a 76-residue protein attached to proteins as an intracellular targeting signal).. Its function is as follows. Protease that can remove conjugated ubiquitin from target proteins and polyubiquitin chains. Inhibits the degradation of target proteins by the proteasome. Cleaves preferentially 'Lys-6' and 'Lys-63'-linked ubiquitin chains. Has lower activity with 'Lys-11' and 'Lys-33'-linked ubiquitin chains, and extremely low activity with 'Lys-27', 'Lys-29' and 'Lys-48'-linked ubiquitin chains (in vitro). Plays a role in the regulation of pathways leading to NF-kappa-B activation. Plays a role in the regulation of DNA repair after double-stranded DNA breaks. Acts as a chromatin regulator via its association with the Polycomb group (PcG) multiprotein PRC1-like complex; may act by deubiquitinating components of the PRC1-like comple. Promotes cell proliferation by deubiquitinating phosphorylated E2F1x. In Rattus norvegicus (Rat), this protein is Ubiquitin carboxyl-terminal hydrolase 11.